The sequence spans 21 residues: DQPGDVKTHKQYDVNYLFFKI.

Belongs to the tyrosinase family. Hemocyanin subfamily. As to expression, hemolymph.

The protein resides in the secreted. Its subcellular location is the extracellular space. Its function is as follows. Hemocyanins are copper-containing oxygen carriers occurring freely dissolved in the hemolymph of many mollusks and arthropods. In Maja squinado (Mediterranean spider crab), this protein is Hemocyanin subunit 1.